Consider the following 517-residue polypeptide: MDIIGGQHLRQMWDDLADVYGHKTALICESSGGVVNRYSYLELNQEINRTANLFYTLGIRKGDKVALHLDNCPEFIFCWFGLAKIGAIMVPINARLLREESTWILQNSQACLLVTSAQFYPMYQQIQQEDASQLRHICLIDMALPADDGVSSFTQLKNQQPATLCYAPPLSTDDTAEILFTSGTTSRPKGVVITHYNLRFAGYYSAWQCALRDDDVYLTVMPAFHIDCQCTAAMAAFSAGATFVLVEKYSARAFWGQVQKYRATITECIPMMIRTLMVQPPSANDRQHRLREVMFYLNLSEQEKDAFCERFGVSLLTSYGMTETIVGIIGDRPGDKRRWPSIGRAGFCYEAEIRDDHNRPLPAGELGEICIKGVPGKTIFKEYFLNPKATAKVLEADGWLHTGDTGYRDEEGFFYFVDRRCNMIKRGGENVSCVELENIIATHPKIQDIVVVGIKDSIRDEAIKAFVVLNEGETLSEEEFFCFCEQNMAKFKVPSYLEIRKDLPRNCSGKIIRKNLK.

It belongs to the ATP-dependent AMP-binding enzyme family.

The catalysed reaction is 4-(trimethylamino)butanoate + ATP + CoA = 4-(trimethylamino)butanoyl-CoA + AMP + diphosphate. It carries out the reaction crotonobetaine + ATP + CoA = crotonobetainyl-CoA + AMP + diphosphate. It catalyses the reaction (R)-carnitine + ATP + CoA = (R)-carnitinyl-CoA + AMP + diphosphate. Its pathway is amine and polyamine metabolism; carnitine metabolism. Its function is as follows. Catalyzes the transfer of CoA to carnitine, generating the initial carnitinyl-CoA needed for the CaiB reaction cycle. Also has activity toward crotonobetaine and gamma-butyrobetaine. This Escherichia coli O45:K1 (strain S88 / ExPEC) protein is Crotonobetaine/carnitine--CoA ligase.